The primary structure comprises 949 residues: Syndetin (949 aa).

A disordered region spans residues 1–28 (MQKIKSLMTRQGLRSPQESVHDLSPIEN). Over residues 8 to 18 (MTRQGLRSPQE) the composition is skewed to polar residues. 2 coiled-coil regions span residues 82–104 (SLQE…LERV) and 198–226 (YSCI…LSKI). Residues 509–581 (FEIQADSKDD…ETLRSRKKSD (73 aa)) are disordered. Basic and acidic residues predominate over residues 569–581 (VSRETLRSRKKSD).

The protein belongs to the syndetin family. Component of the endosome-associated retrograde protein (EARP) complex.

The protein resides in the recycling endosome. The protein localises to the membrane. In terms of biological role, acts as a component of the EARP complex that is involved in endocytic recycling. The EARP complex associates with Rab4-positive endosomes and promotes recycling of internalized transferrin receptor (TFRC) to the plasma membrane. In Gallus gallus (Chicken), this protein is Syndetin.